The following is a 308-amino-acid chain: MSKILVFGHQNPDTDAIGAAISFAYLQKELGKETEAVALGTPSEETQYALDYFNIEAPRVVTEAASETNQVMLVDHNEFQQSISDIAEVNILAVVDHHRIANFETADPLYYRAEPVGCTSTIIYKMFKENNVTIPAQIAGMMVSAIISDTLLFKSPTCTQEDIDAAHALADIAEINLEGYGLDLLKAGTNLSDKSAEVLLDLDAKSFPMNGKTVRVAQVNTVDLAEVLDRQAELEAAMAAENAANNYDLFVLIITNILDSDSELLAIGAEQAKIEAAFNVTLVNNRAFLPGVVSRKKQVVPQLTEVFN.

The Mn(2+) site is built by H9, D13, D15, D75, H97, and D149.

This sequence belongs to the PPase class C family. Mn(2+) serves as cofactor.

The protein resides in the cytoplasm. The catalysed reaction is diphosphate + H2O = 2 phosphate + H(+). The polypeptide is Probable manganese-dependent inorganic pyrophosphatase (Enterococcus faecalis (strain ATCC 700802 / V583)).